The primary structure comprises 327 residues: DNA repair and recombination protein RadA (327 aa).

Position 113–120 (113–120 (GEFGSGKS)) interacts with ATP.

The protein belongs to the eukaryotic RecA-like protein family.

Its function is as follows. Involved in DNA repair and in homologous recombination. Binds and assemble on single-stranded DNA to form a nucleoprotein filament. Hydrolyzes ATP in a ssDNA-dependent manner and promotes DNA strand exchange between homologous DNA molecules. This Ignicoccus hospitalis (strain KIN4/I / DSM 18386 / JCM 14125) protein is DNA repair and recombination protein RadA.